We begin with the raw amino-acid sequence, 328 residues long: UPF0194 membrane protein YE2891 (328 aa).

Residues 1-22 (MNRKKIIVAVVIVALLAAIGYG) form the signal peptide. Coiled coils occupy residues 80–109 (YVNA…REEE) and 139–208 (ANKA…TTLL).

The protein belongs to the UPF0194 family.

The protein resides in the periplasm. This chain is UPF0194 membrane protein YE2891, found in Yersinia enterocolitica serotype O:8 / biotype 1B (strain NCTC 13174 / 8081).